Consider the following 625-residue polypeptide: Voltage-gated potassium channel KCNC4 (625 aa).

2 disordered regions span residues 1 to 24 and 65 to 86; these read MISS…SKTC and LADP…SSGS. Positions 1-28 are inactivation gate; sequence MISSVCVSSYRGRKSGNKPPSKTCLKEE. At 1–227 the chain is on the cytoplasmic side; it reads MISSVCVSSY…EDPYSSRAAR (227 aa). Ser-8, Ser-9, Ser-15, and Ser-21 each carry phosphoserine. Positions 77-86 are enriched in gly residues; sequence DGGGAGSSGS. The Zn(2+) site is built by His-117, Cys-123, Cys-144, and Cys-145. The chain crosses the membrane as a helical span at residues 228-248; the sequence is VVAFASLFFILVSITTFCLET. N-linked (GlcNAc...) asparagine glycosylation is found at Asn-257 and Asn-266. Residues 279 to 299 form a helical membrane-spanning segment; the sequence is EPILTYIEGVCVMWFTLEFLV. Residues 300–313 are Cytoplasmic-facing; that stretch reads RIVCCPDTLDFVKN. Residues 314-334 form a helical membrane-spanning segment; that stretch reads LLNIIDFVAILPFYLEVGLSG. A helical; Voltage-sensor transmembrane segment spans residues 346-365; it reads FLRVVRFVRILRIFKLTRHF. At 366-381 the chain is on the cytoplasmic side; that stretch reads VGLRVLGHTLRASTNE. A helical membrane pass occupies residues 382–402; the sequence is FLLLIIFLALGVLIFATMIYY. 4 residues coordinate K(+): Thr-437, Leu-438, Gly-439, and Tyr-440. The Selectivity filter signature appears at 437-442; the sequence is TLGYGD. A helical transmembrane segment spans residues 453–473; it reads VGALCALAGVLTIAMPVPVIV. Residues 474–625 are Cytoplasmic-facing; sequence NNFGMYYSLA…CVPVSHTCAL (152 aa). The interval 490-581 is disordered; that stretch reads PKKRKKHVPR…RRALRRSGTR (92 aa). The segment covering 528 to 543 has biased composition (basic and acidic residues); sequence AREEGMVERKRADSKQ.

The protein belongs to the potassium channel family. C (Shaw) (TC 1.A.1.2) subfamily. Kv3.4/KCNC4 sub-subfamily. In terms of assembly, homotetramer. Heterotetramer of potassium channel proteins. Post-translationally, phosphorylation of serine residues in the inactivation gate inhibits rapid channel closure.

The protein localises to the membrane. It catalyses the reaction K(+)(in) = K(+)(out). Functionally, voltage-gated potassium channel that opens in response to the voltage difference across the membrane, forming a potassium-selective channel through which potassium ions pass in accordance with their electrochemical gradient. The channel displays rapid activation and inactivation kinetics. This is Voltage-gated potassium channel KCNC4 from Rattus norvegicus (Rat).